Consider the following 80-residue polypeptide: Cell division protein ZapB (80 aa).

The stretch at 3–80 forms a coiled coil; it reads FEVFEKLEAK…ALLGKMEDVQ (78 aa).

It belongs to the ZapB family. In terms of assembly, homodimer. The ends of the coiled-coil dimer bind to each other, forming polymers. Interacts with FtsZ.

The protein localises to the cytoplasm. Non-essential, abundant cell division factor that is required for proper Z-ring formation. It is recruited early to the divisome by direct interaction with FtsZ, stimulating Z-ring assembly and thereby promoting cell division earlier in the cell cycle. Its recruitment to the Z-ring requires functional FtsA or ZipA. The chain is Cell division protein ZapB from Photorhabdus laumondii subsp. laumondii (strain DSM 15139 / CIP 105565 / TT01) (Photorhabdus luminescens subsp. laumondii).